The following is a 143-amino-acid chain: Mediator of RNA polymerase II transcription subunit 21 (143 aa).

Positions 53–130 (KEFEKNIDEL…KVRTLTQDFT (78 aa)) form a coiled coil.

The protein belongs to the Mediator complex subunit 21 family. Component of the Mediator complex.

It localises to the nucleus. Functionally, component of the Mediator complex, a coactivator involved in the regulated transcription of nearly all RNA polymerase II-dependent genes. Mediator functions as a bridge to convey information from gene-specific regulatory proteins to the basal RNA polymerase II transcription machinery. Mediator is recruited to promoters by direct interactions with regulatory proteins and serves as a scaffold for the assembly of a functional preinitiation complex with RNA polymerase II and the general transcription factors. The polypeptide is Mediator of RNA polymerase II transcription subunit 21 (SRB7) (Kluyveromyces lactis (strain ATCC 8585 / CBS 2359 / DSM 70799 / NBRC 1267 / NRRL Y-1140 / WM37) (Yeast)).